A 40-amino-acid polypeptide reads, in one-letter code: U4-ctenitoxin-Co1c (40 aa).

4 cysteine pairs are disulfide-bonded: Cys3–Cys20, Cys10–Cys26, Cys19–Cys40, and Cys28–Cys38.

In terms of tissue distribution, expressed by the venom gland.

Its subcellular location is the secreted. In terms of biological role, not toxic to mice by intracerebroventricular injection. In Ctenus ornatus (Brazilian spider), this protein is U4-ctenitoxin-Co1c.